The following is a 200-amino-acid chain: uncharacterized protein (200 aa).

Low complexity-rich tracts occupy residues 1 to 13 (MTSA…AAES) and 28 to 44 (PSPA…AGPR). Disordered regions lie at residues 1-116 (MTSA…GGPG) and 137-200 (LPRD…SSFF). The span at 88–102 (RCGRPRRRDPRRRRT) shows a compositional bias: basic residues. The segment covering 189–200 (PSSSSGLLSSFF) has biased composition (low complexity).

This is an uncharacterized protein from Homo sapiens (Human).